Here is a 192-residue protein sequence, read N- to C-terminus: Erythropoietin (192 aa).

The first 27 residues, 1-27, serve as a signal peptide directing secretion; that stretch reads MGVHECPAWLWLLLSLVSLPLGLPVPG. Cystine bridges form between Cys-34–Cys-187 and Cys-56–Cys-60. Asn-51 carries an N-linked (GlcNAc...) asparagine glycan. 2 N-linked (GlcNAc...) asparagine glycosylation sites follow: Asn-65 and Asn-110. O-linked (GalNAc...) serine glycosylation occurs at Ser-152.

The protein belongs to the EPO/TPO family. Produced by kidney or liver of adult mammals and by liver of fetal or neonatal mammals.

The protein localises to the secreted. In terms of biological role, hormone involved in the regulation of erythrocyte proliferation and differentiation and the maintenance of a physiological level of circulating erythrocyte mass. Binds to EPOR leading to EPOR dimerization and JAK2 activation thereby activating specific downstream effectors, including STAT1 and STAT3. The protein is Erythropoietin (EPO) of Macaca fascicularis (Crab-eating macaque).